We begin with the raw amino-acid sequence, 419 residues long: UDP-N-acetylglucosamine 1-carboxyvinyltransferase (419 aa).

Phosphoenolpyruvate is bound at residue 22-23 (KN). Arginine 95 provides a ligand contact to UDP-N-acetyl-alpha-D-glucosamine. Cysteine 119 (proton donor) is an active-site residue. Cysteine 119 bears the 2-(S-cysteinyl)pyruvic acid O-phosphothioketal mark. UDP-N-acetyl-alpha-D-glucosamine contacts are provided by residues 164-167 (KVSV), aspartate 308, and isoleucine 330.

The protein belongs to the EPSP synthase family. MurA subfamily.

It is found in the cytoplasm. The catalysed reaction is phosphoenolpyruvate + UDP-N-acetyl-alpha-D-glucosamine = UDP-N-acetyl-3-O-(1-carboxyvinyl)-alpha-D-glucosamine + phosphate. Its pathway is cell wall biogenesis; peptidoglycan biosynthesis. Its function is as follows. Cell wall formation. Adds enolpyruvyl to UDP-N-acetylglucosamine. The sequence is that of UDP-N-acetylglucosamine 1-carboxyvinyltransferase from Rickettsia peacockii (strain Rustic).